A 382-amino-acid chain; its full sequence is MAVLKMPRFKKYHLRLMITCFSTLLLMTYWEKIDNCVVTHVMSFSYRYLFNSFKFINSSFIVNPEDAIKYNHRYLINHQTKCDNKDILLLLFVKSSSENFERRQAIRSTWGNETYIESTLGVTVKVLFALGLHPIPEERGKLKEDLMFEDQKYRDLIQQDFIDTFHNLTLKLLLQLGWKETYCHHAQFLMSADDDVFVHTPNLILYLQGFGQSNTRDLWIGGVHRGSPPNRDKESKYYVSRDLYPWLSYPDYTPGSGYVLSRDVVSRIYQASLTINASFHIDDVFLGICAKMMDVSPTDHAFFSGEGKAPHHHCIYSLMMTSHGHVSDIHEMWRHARNAEDVLISSGLFRRLYCTAVKVRLLCVPFFSNSYPCKAAFFEEDT.

The Cytoplasmic portion of the chain corresponds to 1-13 (MAVLKMPRFKKYH). A helical; Signal-anchor for type II membrane protein transmembrane segment spans residues 14-30 (LRLMITCFSTLLLMTYW). Over 31–382 (EKIDNCVVTH…CKAAFFEEDT (352 aa)) the chain is Lumenal. Asn-57, Asn-112, Asn-167, and Asn-276 each carry an N-linked (GlcNAc...) asparagine glycan.

This sequence belongs to the glycosyltransferase 31 family.

The protein localises to the golgi apparatus membrane. It carries out the reaction a beta-D-Gal-(1-&gt;4)-beta-D-Glc-(1&lt;-&gt;1)-Cer(d18:1(4E)) + UDP-N-acetyl-alpha-D-glucosamine = a beta-D-GlcNAc-(1-&gt;3)-beta-D-Gal-(1-&gt;4)-beta-D-Glc-(1&lt;-&gt;1)-Cer(d18:1(4E)) + UDP + H(+). The enzyme catalyses a neolactoside nLc4Cer(d18:1(4E)) + UDP-N-acetyl-alpha-D-glucosamine = a neolactoside IV(3)-beta-GlcNAc-nLc4Cer(d18:1(4E)) + UDP + H(+). The protein operates within protein modification; protein glycosylation. Beta-1,3-N-acetylglucosaminyltransferase that plays a key role in the synthesis of lacto- or neolacto-series carbohydrate chains on glycolipids. This chain is Lactosylceramide 1,3-N-acetyl-beta-D-glucosaminyltransferase B (b3gnt5b), found in Danio rerio (Zebrafish).